Reading from the N-terminus, the 182-residue chain is uncharacterized protein (182 aa).

BNR repeat units follow at residues 58-69 (WISFDAGENWET) and 102-113 (YITDDRGESWRA).

This is an uncharacterized protein from Saccharomyces cerevisiae (strain ATCC 204508 / S288c) (Baker's yeast).